The primary structure comprises 259 residues: Sesquipedalian-2 (259 aa).

Residues 17–121 enclose the PH domain; that stretch reads PADHMGFLRT…WVKVLSRASF (105 aa). Residues 124–149 are a coiled coil; it reads MRLVVRELESQLQDARQSLALQRRSS. A F&amp;H motif is present at residues 223-235; the sequence is CFSTLHDWYGQEI.

Belongs to the sesquipedalian family. In terms of assembly, forms homodimers and heterodimers with PHETA1. Interacts with OCRL and INPP5B.

It is found in the early endosome. The protein localises to the recycling endosome. The protein resides in the golgi apparatus. Its subcellular location is the trans-Golgi network. It localises to the cytoplasmic vesicle. It is found in the clathrin-coated vesicle. In terms of biological role, plays a role in endocytic trafficking. Required for receptor recycling from endosomes, both to the trans-Golgi network and the plasma membrane. The polypeptide is Sesquipedalian-2 (Homo sapiens (Human)).